Here is a 580-residue protein sequence, read N- to C-terminus: Protein O-linked-mannose beta-1,4-N-acetylglucosaminyltransferase 2 (580 aa).

Over 1–4 the chain is Cytoplasmic; the sequence is MHLS. The helical; Signal-anchor for type II membrane protein transmembrane segment at 5 to 25 threads the bilayer; sequence AVLNALLVSVLAAVLWKHVRL. The Lumenal segment spans residues 26 to 580; sequence REHAASLEEE…PFADVLVCST (555 aa). 2 N-linked (GlcNAc...) asparagine glycosylation sites follow: N99 and N276. The region spanning 488 to 580 is the Fibronectin type-III domain; that stretch reads ARCQASVQGA…PFADVLVCST (93 aa).

Belongs to the glycosyltransferase 61 family.

It localises to the endoplasmic reticulum membrane. It catalyses the reaction 3-O-(alpha-D-mannosyl)-L-threonyl-[protein] + UDP-N-acetyl-alpha-D-glucosamine = 3-O-(N-acetyl-beta-D-glucosaminyl-(1-&gt;4)-alpha-D-mannosyl)-L-threonyl-[protein] + UDP + H(+). The protein operates within protein modification; protein glycosylation. Its function is as follows. O-linked mannose beta-1,4-N-acetylglucosaminyltransferase that transfers UDP-N-acetyl-D-glucosamine to the 4-position of the mannose to generate N-acetyl-D-glucosamine-beta-1,4-O-D-mannosylprotein. Involved in the biosynthesis of the phosphorylated O-mannosyl trisaccharide (N-acetylgalactosamine-beta-3-N-acetylglucosamine-beta-4-(phosphate-6-)mannose), a carbohydrate structure present in alpha-dystroglycan (DAG1), which is required for binding laminin G-like domain-containing extracellular proteins with high affinity. In Bos taurus (Bovine), this protein is Protein O-linked-mannose beta-1,4-N-acetylglucosaminyltransferase 2 (POMGNT2).